A 581-amino-acid chain; its full sequence is Probable peptidoglycan D,D-transpeptidase PenA (581 aa).

Residues 28 to 48 (ISFVLMAMAVLFACLIARGLY) traverse the membrane as a helical segment. The active-site Acyl-ester intermediate is the Ser-310.

Belongs to the transpeptidase family. FtsI subfamily.

It is found in the cell inner membrane. The catalysed reaction is Preferential cleavage: (Ac)2-L-Lys-D-Ala-|-D-Ala. Also transpeptidation of peptidyl-alanyl moieties that are N-acyl substituents of D-alanine.. Its pathway is cell wall biogenesis; peptidoglycan biosynthesis. Its function is as follows. Catalyzes cross-linking of the peptidoglycan cell wall at the division septum. The sequence is that of Probable peptidoglycan D,D-transpeptidase PenA from Neisseria gonorrhoeae.